A 455-amino-acid polypeptide reads, in one-letter code: L-serine dehydratase (455 aa).

The protein belongs to the iron-sulfur dependent L-serine dehydratase family. Requires [4Fe-4S] cluster as cofactor.

It carries out the reaction L-serine = pyruvate + NH4(+). It functions in the pathway carbohydrate biosynthesis; gluconeogenesis. This Helicobacter pylori (strain J99 / ATCC 700824) (Campylobacter pylori J99) protein is L-serine dehydratase (sdaA).